The following is a 794-amino-acid chain: MKLKYGTIIFSGLLGVSAILAACGARGKFDQVDDGKIVLASSLTSKGAANALQTIVKKYNEVKNIDDYPIEIIQIAGGYDGGRGNLQTKLSVKDKNSFYNLILNYPDVVSVLGRVGMELPFDKVRTDKLSPRFLDFNKRISAISKQGIYGIPVSLSTEVLVLNGPVLHYILSSAKGSSGKTQVSQTSSGSNQQKTLQKPLKIDTSDSSTSSLWTQIENAAKNNGKKANNSKSNRRSTDQSTQTHNDQGDASESDKKIKESWGDYEEVDGGLKGFTFKASIFDNWHDLLDFSTRAAKSFKKIKDNNTKKGTDIQGILGVDSSANSLFTSVFAAGNGDYDNFFYKVANGRADFSNFKNRGSSFQNLQSVFNDYKGLIDQNGLFVNKGGSYSSNFQKFHQLAYSISSTSGFYYSFAGNSAKRLKFGDNSFIEYPQYTVPIKAPSKNGDGNSTNSNSDLLGTFTLSSVKKSTDKSKSDSQQNQGKKVEGTPNQGKKAEGAQNQGKKENNSTTIEIYKNKIPDGKNAGKDAILIKDNNLIKQLEDAAKKNGAESNQKQGGESNVQKEQIIGYTTTGNVREDGNHIFRVDKINDEQYDRKIIVGVTVETLEQSSTLQSEEAIVLAAPGKYKSTDKKKVTITQGPNIIGIHANEKENAETQKFVDWFLNTEVDWPAKENSSNKQDQQNSTKKQTAAEFFVESASYILPLKEIFENKEKKENTSNSDKNKSSSQRKNTYAEKALELFQQISKDEIVSYSDPSDFRSGKFRDGIGSNFNAAVSSKADFNKFVKGFIATLGSEI.

A signal peptide spans 1 to 22; the sequence is MKLKYGTIIFSGLLGVSAILAA. A lipid anchor (N-palmitoyl cysteine) is attached at Cys-23. A lipid anchor (S-diacylglycerol cysteine) is attached at Cys-23. The span at 177–196 shows a compositional bias: polar residues; the sequence is SSGKTQVSQTSSGSNQQKTL. Disordered regions lie at residues 177–208, 220–257, and 466–506; these read SSGK…SDSS, AKNN…DKKI, and KSTD…ENNS. A compositionally biased stretch (low complexity) spans 220 to 231; that stretch reads AKNNGKKANNSK. Residues 238–250 are compositionally biased toward polar residues; the sequence is DQSTQTHNDQGDA.

This sequence belongs to the MG185/MG260 family.

It is found in the cell membrane. This is an uncharacterized protein from Mycoplasma pneumoniae (strain ATCC 29342 / M129 / Subtype 1) (Mycoplasmoides pneumoniae).